Reading from the N-terminus, the 368-residue chain is Methionine import ATP-binding protein MetN (368 aa).

The region spanning 5–260 (IELNNLSVQF…PKEALTKQFI (256 aa)) is the ABC transporter domain. 41–48 (GYSGAGKS) contributes to the ATP binding site.

The protein belongs to the ABC transporter superfamily. Methionine importer (TC 3.A.1.24) family. In terms of assembly, the complex is composed of two ATP-binding proteins (MetN), two transmembrane proteins (MetI) and a solute-binding protein (MetQ).

The protein resides in the cell membrane. It catalyses the reaction L-methionine(out) + ATP + H2O = L-methionine(in) + ADP + phosphate + H(+). The enzyme catalyses D-methionine(out) + ATP + H2O = D-methionine(in) + ADP + phosphate + H(+). Part of the ABC transporter complex MetNIQ involved in methionine import. Responsible for energy coupling to the transport system. This chain is Methionine import ATP-binding protein MetN, found in Lactococcus lactis subsp. cremoris (strain MG1363).